A 441-amino-acid polypeptide reads, in one-letter code: GTPase Der (441 aa).

EngA-type G domains are found at residues P3 to T167 and T176 to A351. GTP is bound by residues G9–S16, D56–F60, N119–D122, G182–S189, D229–I233, and N294–D297. In terms of domain architecture, KH-like spans K352–E436.

This sequence belongs to the TRAFAC class TrmE-Era-EngA-EngB-Septin-like GTPase superfamily. EngA (Der) GTPase family. In terms of assembly, associates with the 50S ribosomal subunit.

Its function is as follows. GTPase that plays an essential role in the late steps of ribosome biogenesis. The polypeptide is GTPase Der (Geotalea daltonii (strain DSM 22248 / JCM 15807 / FRC-32) (Geobacter daltonii)).